A 395-amino-acid chain; its full sequence is Multidrug resistance protein MdtL (395 aa).

12 helical membrane-spanning segments follow: residues 4-24 (FLLC…MYLV), 42-62 (IAFS…GKIA), 69-89 (PVAI…SRAS), 93-113 (LFLS…VVAF), 131-151 (LLNG…HLIM), 158-178 (SLFY…LFIL), 217-237 (VSVI…VMGF), 247-267 (ALTA…LGLF), 271-291 (TLML…SLAH), 295-315 (VTLF…GVAM), 328-350 (VASS…LAAI), and 355-377 (AMNM…IFSV).

The protein belongs to the major facilitator superfamily. DHA1 family. MdtL (TC 2.A.1.2.22) subfamily.

It localises to the cell inner membrane. This Salmonella newport (strain SL254) protein is Multidrug resistance protein MdtL.